A 109-amino-acid chain; its full sequence is Probable spanin, inner membrane subunit (109 aa).

Residues 1–17 (MPRTIVAILVLAVVALG) form a helical; Signal-anchor for type II membrane protein membrane-spanning segment. Residues 27-63 (RALGIAQGEIKRQTARAEALEVRYATLQRHVKEVAAR) are a coiled coil.

As to quaternary structure, interacts (via C-terminus) with the spanin outer lipoprotein subunit (via C-terminus). Part of the spanin complex which spans the entire periplasmic space. The spanin complex is composed of spanin inner membrane subunit and spanin outer membrane subunit.

It is found in the host cell inner membrane. Component of the spanin complex that disrupts the host outer membrane and participates in cell lysis during virus exit. The spanin complex conducts the final step in host lysis by disrupting the outer membrane after holin and endolysin action have permeabilized the inner membrane and degraded the host peptidoglycans. Host outer membrane disruption is possibly due to local fusion between the inner and outer membrane performed by the spanin complex. This chain is Probable spanin, inner membrane subunit, found in Pseudomonas aeruginosa.